A 259-amino-acid chain; its full sequence is TCF3 fusion partner homolog (259 aa).

2 disordered regions span residues 51–72 (GLGDSGLRERDEEEEAARGRRR) and 141–210 (EDDG…APVQ). Position 167 is a phosphoserine (Ser-167). Position 172 is a phosphothreonine (Thr-172). Residues Ser-180 and Ser-188 each carry the phosphoserine modification. Residue Thr-203 is modified to Phosphothreonine. A Glycyl lysine isopeptide (Lys-Gly) (interchain with G-Cter in SUMO2) cross-link involves residue Lys-222. The tract at residues 240 to 259 (VSRGPDKLLPYPTLASPPFD) is disordered. A Phosphoserine modification is found at Ser-255.

Interacts with NOL3; translocates NOL3 into the nucleus and negatively regulated TFPT-induced cell death. Component of the chromatin remodeling INO80 complex; specifically part of a complex module associated with the N-terminus of INO80. As to expression, ubiquitously expressed. Abundant in the brain.

The protein localises to the nucleus. Functionally, appears to promote apoptosis in a p53/TP53-independent manner. Its function is as follows. Putative regulatory component of the chromatin remodeling INO80 complex which is involved in transcriptional regulation, DNA replication and probably DNA repair. The sequence is that of TCF3 fusion partner homolog (Tfpt) from Rattus norvegicus (Rat).